Reading from the N-terminus, the 418-residue chain is Aspartate aminotransferase, cytoplasmic (418 aa).

N-acetylserine is present on Ser2. L-aspartate-binding residues include Gly38, Trp135, and Asn188. Lys255 carries the N6-(pyridoxal phosphate)lysine modification. Arg387 lines the L-aspartate pocket. At Ser389 the chain carries Phosphoserine.

Belongs to the class-I pyridoxal-phosphate-dependent aminotransferase family. Homodimer. Pyridoxal 5'-phosphate serves as cofactor.

It localises to the cytoplasm. The protein resides in the peroxisome. The enzyme catalyses L-aspartate + 2-oxoglutarate = oxaloacetate + L-glutamate. In terms of biological role, plays a key role in amino acid metabolism. The chain is Aspartate aminotransferase, cytoplasmic (AAT2) from Saccharomyces cerevisiae (strain ATCC 204508 / S288c) (Baker's yeast).